Here is a 1244-residue protein sequence, read N- to C-terminus: Ras-specific guanine nucleotide-releasing factor 1 (1244 aa).

A PH 1 domain is found at 22 to 129; the sequence is DGTRKGYLSK…WVAAIARASY (108 aa). Serine 71 is modified (phosphoserine; by PLK2). The region spanning 204 to 229 is the IQ domain; sequence KKIKKVQSFLRGWLCRRKWKNIIQDY. Positions 240 to 426 constitute a DH domain; sequence KRNQVVFSML…EELSRVMHDE (187 aa). The PH 2 domain occupies 456-582; sequence TFVRQGSLIQ…WTSDIIQCVD (127 aa). Phosphoserine; by PLK2 occurs at positions 575 and 611. An N-terminal Ras-GEF domain is found at 629 to 743; the sequence is KVLQIRYASV…RRRKLSLNIP (115 aa). Residues 707–730 form a disordered region; that stretch reads GDAPKSPRASRKFSSPPPLAIGTS. A Phosphoserine modification is found at serine 739. Serine 760 and serine 781 each carry phosphoserine; by PLK2. The segment at 800–840 is disordered; sequence TLEESSGFRKPTSDILKEESDDDQSDVDDTEVSPPTPKSFR. Positions 818-830 are enriched in acidic residues; sequence ESDDDQSDVDDTE. Serine 854 bears the Phosphoserine; by PLK2 mark. Residues 1009 to 1241 form the Ras-GEF domain; that stretch reads SAMEIAEQLT…YEASLRIEPK (233 aa).

In terms of assembly, homooligomer and heterooligomer with RASGRF2. Interacts with USP8, thereby regulating its stability. In terms of processing, phosphorylated by PLK2, leading to ubiquitination and degradation by the proteasome. Post-translationally, ubiquitinated and degraded following phosphorylation by PLK2. Phosphorylated by SRC and LCK. Phosphorylation by LCK increases its capacity to stimulate the GDP/GTP exchange on Ras, whereas its phosphorylation by SRC seems not to have an effect on stimulation activity.

Its function is as follows. Promotes the exchange of Ras-bound GDP by GTP. This chain is Ras-specific guanine nucleotide-releasing factor 1 (Rasgrf1), found in Rattus norvegicus (Rat).